The following is a 231-amino-acid chain: Tegument protein UL51 homolog (231 aa).

Cys12 carries S-palmitoyl cysteine; by host lipidation.

Belongs to the herpesviridae UL51 family. In terms of assembly, oligomerizes. Interacts with U75; this interaction mediates U75 incorporation to virions. Phosphorylated. In terms of processing, palmitoylation is necessary for Golgi localization.

Its subcellular location is the virion tegument. The protein localises to the host cytoplasm. It is found in the host Golgi apparatus. Functionally, plays several roles during the time course of infection, including egress of virus particles from the perinuclear space and secondary envelopment of cytoplasmic capsids that bud into specific trans-Golgi network (TGN)-derived membranes. In Human herpesvirus 6B (strain Z29) (HHV-6 variant B), this protein is Tegument protein UL51 homolog (U44).